Consider the following 422-residue polypeptide: Probable glucuronosyltransferase Os01g0926400 (422 aa).

Topologically, residues 1–8 (MGTRPCAG) are cytoplasmic. The helical; Signal-anchor for type II membrane protein transmembrane segment at 9–29 (VASAVAAAVAVLLLAVSCFAA) threads the bilayer. The Lumenal portion of the chain corresponds to 30-422 (AATTTQKHGR…QGLENDLKPW (393 aa)). The N-linked (GlcNAc...) asparagine glycan is linked to asparagine 149.

Belongs to the glycosyltransferase 47 family.

It is found in the golgi apparatus membrane. Involved in the synthesis of glucuronoxylan hemicellulose in secondary cell walls. The sequence is that of Probable glucuronosyltransferase Os01g0926400 from Oryza sativa subsp. japonica (Rice).